Here is a 285-residue protein sequence, read N- to C-terminus: K88 fimbrial protein AB (285 aa).

The N-terminal stretch at Met-1–Ala-21 is a signal peptide.

This sequence belongs to the fimbrial K88 protein family. K88 fimbria, 0.1-1 micrometer in length and 7 nanometers in diameter, is composed of about 100 identical subunits.

Its subcellular location is the fimbrium. Its function is as follows. K88 major fimbrial subunit. Fimbriae (also called pili), are polar filaments radiating from the surface of the bacterium to a length of 0.5-1.5 micrometers and numbering 100-300 per cell. They enable bacteria to colonize the epithelium of specific host organs. The protein is K88 fimbrial protein AB (faeG) of Escherichia coli.